The primary structure comprises 391 residues: Phosphoglycerate kinase (391 aa).

Substrate is bound by residues 21 to 23 (DLN), R36, 59 to 62 (HLGR), R113, and R146. Residues K197, E319, and 345-348 (GGDT) each bind ATP.

This sequence belongs to the phosphoglycerate kinase family. As to quaternary structure, monomer.

The protein localises to the cytoplasm. It carries out the reaction (2R)-3-phosphoglycerate + ATP = (2R)-3-phospho-glyceroyl phosphate + ADP. Its pathway is carbohydrate degradation; glycolysis; pyruvate from D-glyceraldehyde 3-phosphate: step 2/5. The sequence is that of Phosphoglycerate kinase from Shewanella denitrificans (strain OS217 / ATCC BAA-1090 / DSM 15013).